The following is a 276-amino-acid chain: Ribosomal RNA small subunit methyltransferase A (276 aa).

6 residues coordinate S-adenosyl-L-methionine: Asn-27, Leu-29, Gly-54, Glu-75, Asp-101, and Asn-122.

The protein belongs to the class I-like SAM-binding methyltransferase superfamily. rRNA adenine N(6)-methyltransferase family. RsmA subfamily.

It localises to the cytoplasm. It catalyses the reaction adenosine(1518)/adenosine(1519) in 16S rRNA + 4 S-adenosyl-L-methionine = N(6)-dimethyladenosine(1518)/N(6)-dimethyladenosine(1519) in 16S rRNA + 4 S-adenosyl-L-homocysteine + 4 H(+). Its function is as follows. Specifically dimethylates two adjacent adenosines (A1518 and A1519) in the loop of a conserved hairpin near the 3'-end of 16S rRNA in the 30S particle. May play a critical role in biogenesis of 30S subunits. The sequence is that of Ribosomal RNA small subunit methyltransferase A from Brucella abortus (strain S19).